Reading from the N-terminus, the 341-residue chain is tRNA N6-adenosine threonylcarbamoyltransferase (341 aa).

2 residues coordinate Fe cation: H111 and H115. Residues 134–138, D167, G180, and N276 contribute to the substrate site; that span reads LVSGG. D304 contacts Fe cation.

It belongs to the KAE1 / TsaD family. Requires Fe(2+) as cofactor.

It is found in the cytoplasm. The catalysed reaction is L-threonylcarbamoyladenylate + adenosine(37) in tRNA = N(6)-L-threonylcarbamoyladenosine(37) in tRNA + AMP + H(+). Functionally, required for the formation of a threonylcarbamoyl group on adenosine at position 37 (t(6)A37) in tRNAs that read codons beginning with adenine. Is involved in the transfer of the threonylcarbamoyl moiety of threonylcarbamoyl-AMP (TC-AMP) to the N6 group of A37, together with TsaE and TsaB. TsaD likely plays a direct catalytic role in this reaction. In Pseudomonas fluorescens (strain Pf0-1), this protein is tRNA N6-adenosine threonylcarbamoyltransferase.